Consider the following 143-residue polypeptide: MAVYLLAVAILFCIQGWPSGTVQGEVMPFMEVYDRSACQTREMLVPILKEYPNEVSHLFKPSCVPVLRCGGCCSDESLTCTATGKRSVGREVMRVDPHKGTSKIEVMQFKEHTACECRPRSPGDVNDGRNPKEGEPRARFPFV.

The signal sequence occupies residues 1–24 (MAVYLLAVAILFCIQGWPSGTVQG). Glu25 is subject to Pyrrolidone carboxylic acid (Glu). Cystine bridges form between Cys38-Cys80, Cys69-Cys115, and Cys73-Cys117. The segment at 117-143 (CRPRSPGDVNDGRNPKEGEPRARFPFV) is disordered.

Belongs to the PDGF/VEGF growth factor family. Snake venom VEGF subfamily. As to quaternary structure, homodimer; disulfide-linked. Interacts with VEGF receptor-1 (FLT1) with a high affinity, whereas it binds to VEGF receptor-2 (KDR) with a low affinity. Does not bind to VEGFR-3/FLT4 and neuropilin-1 (NRP1). In terms of tissue distribution, expressed by the venom gland.

It is found in the secreted. In terms of biological role, snake venom VEGFs may contribute to venom dispersion and prey subjugation by inducing vascular permeability and hypotension. This protein activates the vascular endothelial growth factor receptor-1 (VEGFR-1/FLT1), and consequently promotes the proliferation and tissue factor production of endothelial cells, the neovascularization in the chicken chorioallantoic membrane, and increases vascular permeability. Also stimulates tissue-factor production and human monocyte chemotaxis. The protein is Snake venom vascular endothelial growth factor toxin of Protobothrops mucrosquamatus (Taiwan habu).